The chain runs to 523 residues: MAMASLARRKAYAVVSSSRSSVFLTSLRGFASGSDENDVVVIGGGPGGYVAAIKASQLGLKTTCIEKRGTLGGTCLNVGCIPSKALLHSSHMYHEAKHSFANHGIKLSSVEVDLAGMMAQKDKAVSNLTKGIEGLFKKNKVNYVKGYGKFVSPSEVSVDTIDGGNTVVKGKHIIIATGSDVKSLPGVTIDEKKIVSSTGALALTEIPKKLVVIGAGYIGLEMGSVWGRLGSEVTVVEFASDIVPTMDAEVRKQFQRSLEKQGMKFQLKTKVVGVDTSGDGVKLTLEPAAGGDQTILETDVVLVSAGRTPFTAGLGLDKIGVETDKIRRILVNERFTTNVSGVYAIGDVIPGPMLAHKAEEDGVACVEFIAGKVGHVDYDKVPGVVYTTPEVAYVGKTEEQVKALGVEYRVGKFPFMANSRAKAIDNAEGLVKILAEKETDKILGVHIMAPNAGELIHEAAIALQYDASSEDIARVCHAHPTMSEAVKEAAMATYDKPHSHMKSWLLLHSLLFIFVQQFTMTWR.

A mitochondrion-targeting transit peptide spans 1–30; it reads MAMASLARRKAYAVVSSSRSSVFLTSLRGF. FAD contacts are provided by residues 66 to 75, Lys84, Gly148, and 177 to 179; these read EKRGTLGGTC and TGS. Cys75 and Cys80 are oxidised to a cystine. Residues 214 to 221, Glu237, Val271, and Gly306 contribute to the NAD(+) site; that span reads GAGYIGLE. FAD-binding positions include Asp347 and 353–356; that span reads MLAH. His479 functions as the Proton acceptor in the catalytic mechanism.

Belongs to the class-I pyridine nucleotide-disulfide oxidoreductase family. Homodimer. It depends on FAD as a cofactor.

It is found in the mitochondrion. The enzyme catalyses 2 Fe(III)-[leghemoglobin] + NADH = 2 Fe(II)-[leghemoglobin] + NAD(+) + H(+). It catalyses the reaction 2 Fe(III)-[leghemoglobin] + NADPH = 2 Fe(II)-[leghemoglobin] + NADP(+) + H(+). In terms of biological role, reduces ferric leghemoglobin (Lb) to ferrous Lb. The protein is Leghemoglobin reductase (FLBR) of Vigna unguiculata (Cowpea).